The following is a 309-amino-acid chain: Lipoyl synthase (309 aa).

Positions 56, 61, 67, 82, 86, 89, and 296 each coordinate [4Fe-4S] cluster. Residues 68 to 285 (FKRGTATFMI…RVAGLKMGFS (218 aa)) enclose the Radical SAM core domain.

Belongs to the radical SAM superfamily. Lipoyl synthase family. [4Fe-4S] cluster is required as a cofactor.

The protein resides in the cytoplasm. It catalyses the reaction [[Fe-S] cluster scaffold protein carrying a second [4Fe-4S](2+) cluster] + N(6)-octanoyl-L-lysyl-[protein] + 2 oxidized [2Fe-2S]-[ferredoxin] + 2 S-adenosyl-L-methionine + 4 H(+) = [[Fe-S] cluster scaffold protein] + N(6)-[(R)-dihydrolipoyl]-L-lysyl-[protein] + 4 Fe(3+) + 2 hydrogen sulfide + 2 5'-deoxyadenosine + 2 L-methionine + 2 reduced [2Fe-2S]-[ferredoxin]. The protein operates within protein modification; protein lipoylation via endogenous pathway; protein N(6)-(lipoyl)lysine from octanoyl-[acyl-carrier-protein]: step 2/2. In terms of biological role, catalyzes the radical-mediated insertion of two sulfur atoms into the C-6 and C-8 positions of the octanoyl moiety bound to the lipoyl domains of lipoate-dependent enzymes, thereby converting the octanoylated domains into lipoylated derivatives. This is Lipoyl synthase from Syntrophotalea carbinolica (strain DSM 2380 / NBRC 103641 / GraBd1) (Pelobacter carbinolicus).